The sequence spans 412 residues: ATP phosphoribosyltransferase regulatory subunit (412 aa).

It belongs to the class-II aminoacyl-tRNA synthetase family. HisZ subfamily. In terms of assembly, heteromultimer composed of HisG and HisZ subunits.

It is found in the cytoplasm. It participates in amino-acid biosynthesis; L-histidine biosynthesis; L-histidine from 5-phospho-alpha-D-ribose 1-diphosphate: step 1/9. Its function is as follows. Required for the first step of histidine biosynthesis. May allow the feedback regulation of ATP phosphoribosyltransferase activity by histidine. The chain is ATP phosphoribosyltransferase regulatory subunit from Dehalococcoides mccartyi (strain ATCC BAA-2100 / JCM 16839 / KCTC 5957 / BAV1).